Here is a 378-residue protein sequence, read N- to C-terminus: Flagellin E (378 aa).

Coiled-coil stretches lie at residues 98 to 139 (QSAN…KLLN) and 311 to 339 (MQNR…IKDA).

This sequence belongs to the bacterial flagellin family. Heteromer of multiple flagellin subunits including FlaA, FlaB, FlaC, FlaD and FlaE.

The protein resides in the secreted. The protein localises to the bacterial flagellum. Flagellin is the subunit protein which polymerizes to form the filaments of bacterial flagella. FlaE is not essential for flagellar synthesis and motility. In Vibrio cholerae serotype O1 (strain ATCC 39541 / Classical Ogawa 395 / O395), this protein is Flagellin E (flaE).